The chain runs to 401 residues: Phosrestin-1 (401 aa).

The protein belongs to the arrestin family.

Directly interacts with light-activated rhodopsin thereby activating the phosphorylation of metarhodopsin. Inhibits the dephosphorylation of metarhodopsin. This Calliphora vicina (Blue blowfly) protein is Phosrestin-1 (ARR2).